Here is an 896-residue protein sequence, read N- to C-terminus: Translation initiation factor IF-2 (896 aa).

Disordered regions lie at residues 32–99 and 117–304; these read LAQA…TALP and EITS…KQAE. Positions 35–48 are enriched in polar residues; sequence AGSSDTKNSPASKA. The span at 153-169 shows a compositional bias: basic and acidic residues; that stretch reads TPERIEETPIIRTRTEP. The segment covering 203–214 has biased composition (low complexity); that stretch reads AASTEETTQQQP. The segment covering 215 to 227 has biased composition (polar residues); the sequence is RQNDAASHNNKQQ. The segment covering 228 to 241 has biased composition (low complexity); sequence PSGTSSRPASSAPS. Basic and acidic residues predominate over residues 256 to 280; that stretch reads RGSERDRSKRSDESVKAFTGRDRYG. The 170-residue stretch at 401-570 folds into the tr-type G domain; it reads IRSPIVAFMG…ALQAEVLELK (170 aa). Positions 410 to 417 are G1; sequence GHVDHGKT. GTP is bound at residue 410-417; that stretch reads GHVDHGKT. The G2 stretch occupies residues 435–439; sequence AITQH. The segment at 456-459 is G3; sequence DTPG. GTP-binding positions include 456–460 and 510–513; these read DTPGH and NKCD. Positions 510 to 513 are G4; that stretch reads NKCD. Positions 546–548 are G5; it reads SAK.

The protein belongs to the TRAFAC class translation factor GTPase superfamily. Classic translation factor GTPase family. IF-2 subfamily.

The protein resides in the cytoplasm. Its function is as follows. One of the essential components for the initiation of protein synthesis. Protects formylmethionyl-tRNA from spontaneous hydrolysis and promotes its binding to the 30S ribosomal subunits. Also involved in the hydrolysis of GTP during the formation of the 70S ribosomal complex. The protein is Translation initiation factor IF-2 of Chlamydia trachomatis serovar L2 (strain ATCC VR-902B / DSM 19102 / 434/Bu).